A 213-amino-acid chain; its full sequence is Peptidyl-tRNA hydrolase (213 aa).

Tyr-26 contacts tRNA. His-31 functions as the Proton acceptor in the catalytic mechanism. Positions 78, 80, and 126 each coordinate tRNA.

Belongs to the PTH family. In terms of assembly, monomer.

It is found in the cytoplasm. It carries out the reaction an N-acyl-L-alpha-aminoacyl-tRNA + H2O = an N-acyl-L-amino acid + a tRNA + H(+). In terms of biological role, hydrolyzes ribosome-free peptidyl-tRNAs (with 1 or more amino acids incorporated), which drop off the ribosome during protein synthesis, or as a result of ribosome stalling. Catalyzes the release of premature peptidyl moieties from peptidyl-tRNA molecules trapped in stalled 50S ribosomal subunits, and thus maintains levels of free tRNAs and 50S ribosomes. The polypeptide is Peptidyl-tRNA hydrolase (Nostoc punctiforme (strain ATCC 29133 / PCC 73102)).